A 353-amino-acid chain; its full sequence is 4-hydroxy-2-oxovalerate aldolase 2 (353 aa).

Positions V14–A266 constitute a Pyruvate carboxyltransferase domain. Residue R22–D23 coordinates substrate. Position 23 (D23) interacts with Mn(2+). Catalysis depends on H26, which acts as the Proton acceptor. 2 residues coordinate substrate: S176 and H205. Mn(2+) is bound by residues H205 and H207. Position 296 (Y296) interacts with substrate.

It belongs to the 4-hydroxy-2-oxovalerate aldolase family.

It catalyses the reaction (S)-4-hydroxy-2-oxopentanoate = acetaldehyde + pyruvate. This is 4-hydroxy-2-oxovalerate aldolase 2 from Mycobacterium sp. (strain JLS).